Consider the following 288-residue polypeptide: Ninja-family protein 6 (288 aa).

2 disordered regions span residues methionine 1–arginine 50 and leucine 66–glycine 207. Over residues alanine 12–glycine 23 the composition is skewed to gly residues. Low complexity predominate over residues leucine 76–threonine 86. Basic and acidic residues predominate over residues glutamate 91–arginine 103. Positions arginine 131 to aspartate 173 are enriched in polar residues. Low complexity predominate over residues arginine 195–glycine 207.

This sequence belongs to the Ninja family.

Its subcellular location is the nucleus. This Zea mays (Maize) protein is Ninja-family protein 6.